The sequence spans 414 residues: Enterobactin exporter EntS (414 aa).

The Cytoplasmic portion of the chain corresponds to 1–21; it reads MNRQSWLLNLSLLKTHPAFRA. The chain crosses the membrane as a helical span at residues 22–42; it reads VFLARFISIVSLGLLGVAVPV. The Periplasmic segment spans residues 43–55; it reads QIQMMTHSTWQVG. The chain crosses the membrane as a helical span at residues 56-76; sequence LSVTLTGGAMFIGLMVGGVLA. Over 77–83 the chain is Cytoplasmic; it reads DRYERKK. The chain crosses the membrane as a helical span at residues 84–104; that stretch reads VILLARGTCGIGFIGLCVNAL. At 105–109 the chain is on the periplasmic side; it reads LPEPS. A helical membrane pass occupies residues 110–130; the sequence is LLAIYLLGLWDGFFASLGVTA. Over 131–156 the chain is Cytoplasmic; sequence LLAATPALVGRENLMQAGAITMLTVR. Residues 157-177 form a helical membrane-spanning segment; that stretch reads LGSVISPMLGGILLASGGVAW. N178 is a topological domain (periplasmic). A helical membrane pass occupies residues 179-199; sequence YGLAAAGTFITLLPLLTLPRL. The Cytoplasmic portion of the chain corresponds to 200–218; that stretch reads PVPPQPRENPFLALLAAFR. Residues 219–239 form a helical membrane-spanning segment; that stretch reads FLLACPLIGGIALLGGLVTMA. Over 240–256 the chain is Periplasmic; sequence SAVRVLYPALAMSWQMS. A helical transmembrane segment spans residues 257-277; that stretch reads AAQIGLLYAAIPLGAAIGALT. Residues 278–287 are Cytoplasmic-facing; it reads SGQLAHSVRP. Residues 288–307 traverse the membrane as a helical segment; sequence GLIMLVSTVGSFLAVGLFAI. The Periplasmic portion of the chain corresponds to 308–313; that stretch reads MPVWIA. The helical transmembrane segment at 314-336 threads the bilayer; it reads GVICLALFGWLSAISSLLQYTLL. Residues 337 to 356 lie on the Cytoplasmic side of the membrane; that stretch reads QTQTPENMLGRMNGLWTAQN. Residues 357–377 form a helical membrane-spanning segment; that stretch reads VTGDAIGAALLGGLGAMMTPV. Position 378 (A378) is a topological domain, periplasmic. Residues 379-399 traverse the membrane as a helical segment; the sequence is SASVSGFGLVIIGLLLLLVLG. The Cytoplasmic segment spans residues 400–414; sequence ELRRFRQTSPVSDAG.

Belongs to the major facilitator superfamily. EntS (TC 2.A.1.38) family.

Its subcellular location is the cell inner membrane. Component of an export pathway for enterobactin. The chain is Enterobactin exporter EntS from Salmonella paratyphi A (strain ATCC 9150 / SARB42).